A 101-amino-acid chain; its full sequence is Small ribosomal subunit protein uS14 (101 aa).

The protein belongs to the universal ribosomal protein uS14 family. As to quaternary structure, part of the 30S ribosomal subunit. Contacts proteins S3 and S10.

Functionally, binds 16S rRNA, required for the assembly of 30S particles and may also be responsible for determining the conformation of the 16S rRNA at the A site. In Blochmanniella pennsylvanica (strain BPEN), this protein is Small ribosomal subunit protein uS14.